A 162-amino-acid polypeptide reads, in one-letter code: Mitochondrial intermembrane space import and assembly protein 40 homolog (162 aa).

A disordered region spans residues 1–61 (MGQAQSDENS…DNENESLEAK (61 aa)). A compositionally biased stretch (low complexity) spans 9–18 (NSIPTTTTTN). Intrachain disulfides connect cysteine 68/cysteine 70, cysteine 79/cysteine 112, and cysteine 89/cysteine 102. The CHCH domain occupies 76-120 (NGSCGSQFSEAFLCFLKSTAEEKGSDCVNPFVALQSCINANPDAF). 2 short sequence motifs (cx9C motif) span residues 79–89 (CGSQFSEAFLC) and 102–112 (CVNPFVALQSC). The segment at 119–162 (AFSKSVTGDEKETEKKEEQPPVQDHRIIPPLWAKDPPRSGNSKL) is disordered. Residues 125–145 (TGDEKETEKKEEQPPVQDHRI) are compositionally biased toward basic and acidic residues.

It localises to the mitochondrion intermembrane space. The protein localises to the peroxisome matrix. Required for the import and folding of small cysteine-containing proteins in the mitochondrial intermembrane space. Involved in the mitochondrial oxidative folding of the copper-zinc superoxide dismutase CSD1, the copper chaperone for superoxide dismutase CCS, and subunits of the mitochondrial membrane respiratory chain NADH dehydrogenase (Complex I). Involved in the peroxisomal oxidative folding of the copper-zinc superoxide dismutase CSD3, and the fatty acid beta-oxidation multifunctional protein AIM1. This is Mitochondrial intermembrane space import and assembly protein 40 homolog from Arabidopsis thaliana (Mouse-ear cress).